We begin with the raw amino-acid sequence, 1756 residues long: Transposon Ty1-PR2 Gag-Pol polyprotein (1756 aa).

Composition is skewed to polar residues over residues 1-10 (MESQQLSNYP), 48-60 (TKAN…TPAS), and 127-152 (QSQF…GNTF). Disordered stretches follow at residues 1 to 93 (MESQ…MMTQ), 126 to 173 (PQSQ…RPPP), and 352 to 421 (GSRN…SKST). A compositionally biased stretch (low complexity) spans 153 to 165 (TDSSSADSDMTST). The interval 299–401 (NNGIHINNKV…NSKSKTARAH (103 aa)) is RNA-binding. Over residues 402–418 (NVSTSNNSPSTDNDSIS) the composition is skewed to low complexity. The active-site For protease activity; shared with dimeric partner is the Asp461. An integrase-type zinc finger-like region spans residues 583 to 640 (NVHTSESTRKYPYPFIHRMLAHANAQTIRYSLKNNTITYFNESDVDWSSAIDYQCPDC). An Integrase catalytic domain is found at 660-836 (NSYEPFQYLH…AGLDISTLLP (177 aa)). Residues Asp671 and Asp736 each coordinate Mg(2+). Disordered stretches follow at residues 957–1088 (SKAV…ETEK), 1093–1112 (RSPS…NIVP), and 1131–1188 (DLPL…DNET). The segment covering 961-970 (SPTDSTPPST) has biased composition (low complexity). Polar residues predominate over residues 1006-1016 (STPQISNIEST). Over residues 1039–1054 (ESSHASKSKDFRHSDS) the composition is skewed to basic and acidic residues. 2 stretches are compositionally biased toward polar residues: residues 1055 to 1083 (YSEN…QISD) and 1102 to 1112 (PENNSSHNIVP). A Bipartite nuclear localization signal motif is present at residues 1179–1213 (KKRSLEDNETEIKVSRDTWNTKNMRSLEPPRSKKR). In terms of domain architecture, Reverse transcriptase Ty1/copia-type spans 1339–1477 (NNYYITQLDI…DILGLEIKYQ (139 aa)). Mg(2+) contacts are provided by Asp1347, Asp1428, Asp1429, Asp1611, Glu1653, and Asp1686. An RNase H Ty1/copia-type domain is found at 1611-1753 (DASYGNQPYY…IKTFKLLTNK (143 aa)).

As to quaternary structure, the capsid protein forms a homotrimer, from which the VLPs are assembled. The protease is a homodimer, whose active site consists of two apposed aspartic acid residues. In terms of processing, initially, virus-like particles (VLPs) are composed of the structural unprocessed proteins Gag and Gag-Pol, and also contain the host initiator methionine tRNA (tRNA(i)-Met) which serves as a primer for minus-strand DNA synthesis, and a dimer of genomic Ty RNA. Processing of the polyproteins occurs within the particle and proceeds by an ordered pathway, called maturation. First, the protease (PR) is released by autocatalytic cleavage of the Gag-Pol polyprotein yielding capsid protein p45 and a Pol-p154 precursor protein. This cleavage is a prerequisite for subsequent processing of Pol-p154 at the remaining sites to release the mature structural and catalytic proteins. Maturation takes place prior to the RT reaction and is required to produce transposition-competent VLPs.

Its subcellular location is the cytoplasm. The protein resides in the nucleus. It carries out the reaction DNA(n) + a 2'-deoxyribonucleoside 5'-triphosphate = DNA(n+1) + diphosphate. The enzyme catalyses Endonucleolytic cleavage to 5'-phosphomonoester.. Capsid protein (CA) is the structural component of the virus-like particle (VLP), forming the shell that encapsulates the retrotransposons dimeric RNA genome. The particles are assembled from trimer-clustered units and there are holes in the capsid shells that allow for the diffusion of macromolecules. CA also has nucleocapsid-like chaperone activity, promoting primer tRNA(i)-Met annealing to the multipartite primer-binding site (PBS), dimerization of Ty1 RNA and initiation of reverse transcription. Functionally, the aspartyl protease (PR) mediates the proteolytic cleavages of the Gag and Gag-Pol polyproteins after assembly of the VLP. In terms of biological role, reverse transcriptase/ribonuclease H (RT) is a multifunctional enzyme that catalyzes the conversion of the retro-elements RNA genome into dsDNA within the VLP. The enzyme displays a DNA polymerase activity that can copy either DNA or RNA templates, and a ribonuclease H (RNase H) activity that cleaves the RNA strand of RNA-DNA heteroduplexes during plus-strand synthesis and hydrolyzes RNA primers. The conversion leads to a linear dsDNA copy of the retrotransposon that includes long terminal repeats (LTRs) at both ends. Its function is as follows. Integrase (IN) targets the VLP to the nucleus, where a subparticle preintegration complex (PIC) containing at least integrase and the newly synthesized dsDNA copy of the retrotransposon must transit the nuclear membrane. Once in the nucleus, integrase performs the integration of the dsDNA into the host genome. The protein is Transposon Ty1-PR2 Gag-Pol polyprotein (TY1B-PR2) of Saccharomyces cerevisiae (strain ATCC 204508 / S288c) (Baker's yeast).